The following is an 89-amino-acid chain: Small ribosomal subunit protein uS15 (89 aa).

The protein belongs to the universal ribosomal protein uS15 family. As to quaternary structure, part of the 30S ribosomal subunit. Forms a bridge to the 50S subunit in the 70S ribosome, contacting the 23S rRNA.

Its function is as follows. One of the primary rRNA binding proteins, it binds directly to 16S rRNA where it helps nucleate assembly of the platform of the 30S subunit by binding and bridging several RNA helices of the 16S rRNA. Forms an intersubunit bridge (bridge B4) with the 23S rRNA of the 50S subunit in the ribosome. The chain is Small ribosomal subunit protein uS15 from Methylorubrum extorquens (strain CM4 / NCIMB 13688) (Methylobacterium extorquens).